The following is a 468-amino-acid chain: Adenosylhomocysteinase (468 aa).

3 residues coordinate substrate: T57, D132, and E194. 195 to 197 (TTT) provides a ligand contact to NAD(+). Substrate-binding residues include K224 and D228. Residues N229, 258–263 (GFGDVG), E281, N316, 337–339 (IGH), and N382 contribute to the NAD(+) site.

This sequence belongs to the adenosylhomocysteinase family. NAD(+) is required as a cofactor.

Its subcellular location is the cytoplasm. The catalysed reaction is S-adenosyl-L-homocysteine + H2O = L-homocysteine + adenosine. It functions in the pathway amino-acid biosynthesis; L-homocysteine biosynthesis; L-homocysteine from S-adenosyl-L-homocysteine: step 1/1. Functionally, may play a key role in the regulation of the intracellular concentration of adenosylhomocysteine. The protein is Adenosylhomocysteinase of Methylobacterium sp. (strain 4-46).